A 287-amino-acid chain; its full sequence is ATP synthase gamma chain (287 aa).

The protein belongs to the ATPase gamma chain family. F-type ATPases have 2 components, CF(1) - the catalytic core - and CF(0) - the membrane proton channel. CF(1) has five subunits: alpha(3), beta(3), gamma(1), delta(1), epsilon(1). CF(0) has three main subunits: a, b and c.

It is found in the cell inner membrane. Produces ATP from ADP in the presence of a proton gradient across the membrane. The gamma chain is believed to be important in regulating ATPase activity and the flow of protons through the CF(0) complex. The polypeptide is ATP synthase gamma chain (Shigella boydii serotype 4 (strain Sb227)).